We begin with the raw amino-acid sequence, 316 residues long: Ornithine carbamoyltransferase (316 aa).

Residues 59–62 (STRT), Gln86, Arg110, and 137–140 (HPCQ) each bind carbamoyl phosphate. Residues Asn168, Asp232, and 236–237 (SM) contribute to the L-ornithine site. Residues 273–274 (CL) and Arg301 each bind carbamoyl phosphate.

It belongs to the aspartate/ornithine carbamoyltransferase superfamily. OTCase family.

The protein localises to the cytoplasm. It carries out the reaction carbamoyl phosphate + L-ornithine = L-citrulline + phosphate + H(+). It functions in the pathway amino-acid degradation; L-arginine degradation via ADI pathway; carbamoyl phosphate from L-arginine: step 2/2. Functionally, reversibly catalyzes the transfer of the carbamoyl group from carbamoyl phosphate (CP) to the N(epsilon) atom of ornithine (ORN) to produce L-citrulline. This chain is Ornithine carbamoyltransferase, found in Listeria monocytogenes serotype 4a (strain HCC23).